The sequence spans 402 residues: Succinyl-CoA--D-citramalate CoA-transferase (402 aa).

Asp174 serves as the catalytic Nucleophile.

Belongs to the CoA-transferase III family. As to quaternary structure, homodimer.

The catalysed reaction is (3R)-citramalate + succinyl-CoA = (3R)-citramalyl-CoA + succinate. The enzyme catalyses (R)-malate + succinyl-CoA = (R)-malyl-CoA + succinate. Functionally, involved in the 3-hydroxypropionate cycle used for autotrophic carbon dioxide fixation, and in the glyoxylate assimilation cycle used to regenerate acetyl-CoA and produce pyruvate as universal precursor for biosynthesis. Catalyzes the transfer of CoA moiety from succinyl-CoA to D-citramalate to yield citramalyl-CoA. This is Succinyl-CoA--D-citramalate CoA-transferase from Chloroflexus aurantiacus (strain ATCC 29366 / DSM 635 / J-10-fl).